Consider the following 266-residue polypeptide: MKLSLSPPPYADAPVVVLISGLGGSGSYWLPQLAVLEQEYQVVCYDQRGTGNNPDTLAEDYSIAQMAAELHQALVAAGIERYAVVGHALGALVGMQLALDYPASVTVLVSVNGWLRINAHTRRCFQVREQLLHSGGAQAWVAAQPLFLYPADWMAARAPRLEAEDALALAHFQGKNNLLRRLNALKRADFSHHADRIRCPVQIICASDDLLVPTACSSELHAALPDSQKMVMRYGGHACNVTDPETFNALLLNGLASLLHHREAAL.

This sequence belongs to the AB hydrolase superfamily. Hydrolase RutD family.

The enzyme catalyses carbamate + 2 H(+) = NH4(+) + CO2. Involved in pyrimidine catabolism. May facilitate the hydrolysis of carbamate, a reaction that can also occur spontaneously. The sequence is that of Putative carbamate hydrolase RutD from Escherichia coli O7:K1 (strain IAI39 / ExPEC).